The chain runs to 325 residues: Polyprenyl transferase mpaA (325 aa).

3 helical membrane passes run 27–47, 56–76, and 108–128; these read MPYYTMMAAVWSTLIAGALKL, VEYILFKAGLCFVHCLLLCGA, and VEALVWMVGQYFLSVKMLDLI. Residue Asn131 is glycosylated (N-linked (GlcNAc...) asparagine). A run of 6 helical transmembrane segments spans residues 134–151, 159–179, 192–212, 240–260, 262–282, and 295–315; these read IWGLMLPLTASIMLYPYL, VFIYPQYILGLAVAYPSITGW, IFTHCTPICLLIFFWCLYFNT, LFLAFLGALPLAVIPYVVLKI, SPWLWFSWMAVWTVSIVMQIV, and IHWDNFLLGLWTTVACIVEVG.

Belongs to the UbiA prenyltransferase family. It depends on Mg(2+) as a cofactor.

The protein resides in the golgi apparatus membrane. It carries out the reaction 5,7-dihydroxy-4-methylphthalide + (2E,6E)-farnesyl diphosphate = 4-farnesyl-3,5-dihydroxy-6-methylphthalide + diphosphate. Its pathway is secondary metabolite biosynthesis; terpenoid biosynthesis. Its function is as follows. Polyprenyl transferase; part of the gene cluster that mediates the biosynthesis of mycophenolic acid (MPA), the first isolated antibiotic natural product in the world obtained from a culture of Penicillium brevicompactum in 1893. MpaA is a Golgi apparatus-associated enzyme that catalyzes the prenylation of 5,7-dihydroxy-4,6-dimethylphthalide (DHMP) to yield farnesyl-DHMP (FDHMP). The first step of the pathway is the synthesis of 5-methylorsellinic acid (5MOA) by the cytosolic polyketide synthase mpaC. 5MOA is then converted to the phthalide compound 5,7-dihydroxy-4,6-dimethylphthalide (DHMP) by the endoplasmic reticulum-bound cytochrome P450 monooxygenase mpaDE. MpaDE first catalyzes hydroxylation of 5-MOA to 4,6-dihydroxy-2-(hydroxymethyl)-3-methylbenzoic acid (DHMB). MpaDE then acts as a lactone synthase that catalyzes the ring closure to convert DHMB into DHMP. The next step is the prenylation of DHMP by the Golgi apparatus-associated prenyltransferase mpaA to yield farnesyl-DHMP (FDHMP). The ER-bound oxygenase mpaB then mediates the oxidative cleavage the C19-C20 double bond in FDHMP to yield FDHMP-3C via a mycophenolic aldehyde intermediate. The O-methyltransferase mpaG catalyzes the methylation of FDHMP-3C to yield MFDHMP-3C. After the cytosolic methylation of FDHMP-3C, MFDHMP-3C enters into peroxisomes probably via free diffusion due to its low molecular weight. Upon a peroxisomal CoA ligation reaction, catalyzed by a beta-oxidation component enzyme acyl-CoA ligase ACL891, MFDHMP-3C-CoA would then be restricted to peroxisomes for the following beta-oxidation pathway steps. The peroxisomal beta-oxidation machinery than converts MFDHMP-3C-CoA into MPA_CoA, via a beta-oxidation chain-shortening process. Finally mpaH acts as a peroxisomal acyl-CoA hydrolase with high substrate specificity toward MPA-CoA to release the final product MPA. The protein is Polyprenyl transferase mpaA of Penicillium roqueforti (strain FM164).